The following is a 288-amino-acid chain: Small ribosomal subunit protein uS3 (288 aa).

The 69-residue stretch at 38-106 (IRRMMSKGLE…QVQLNIIEVK (69 aa)) folds into the KH type-2 domain. The disordered stretch occupies residues 209–288 (PGRETPAEAP…TQPAETQQEG (80 aa)). A compositionally biased stretch (basic and acidic residues) spans 219–232 (SRPRRERGDRSERP). A compositionally biased stretch (low complexity) spans 249-264 (AGRAAATTIAQAAETP). A compositionally biased stretch (polar residues) spans 277–288 (AATQPAETQQEG).

It belongs to the universal ribosomal protein uS3 family. In terms of assembly, part of the 30S ribosomal subunit. Forms a tight complex with proteins S10 and S14.

Functionally, binds the lower part of the 30S subunit head. Binds mRNA in the 70S ribosome, positioning it for translation. The protein is Small ribosomal subunit protein uS3 of Salinispora arenicola (strain CNS-205).